A 483-amino-acid polypeptide reads, in one-letter code: Betaine aldehyde dehydrogenase (483 aa).

K(+)-binding residues include isoleucine 27 and aspartate 93. Residue 149-151 (GAW) coordinates NAD(+). Lysine 161 serves as the catalytic Charge relay system. 175–178 (KPSE) lines the NAD(+) pocket. Valine 179 lines the K(+) pocket. NAD(+) is bound at residue 228 to 231 (SVPT). Valine 243 is a K(+) binding site. Residue glutamate 249 is the Proton acceptor of the active site. NAD(+) is bound by residues glycine 251, cysteine 283, and glutamate 380. Catalysis depends on cysteine 283, which acts as the Nucleophile. A Cysteine sulfenic acid (-SOH) modification is found at cysteine 283. The K(+) site is built by lysine 450 and glycine 453. The active-site Charge relay system is glutamate 457.

Belongs to the aldehyde dehydrogenase family. In terms of assembly, dimer of dimers. Requires K(+) as cofactor.

It catalyses the reaction betaine aldehyde + NAD(+) + H2O = glycine betaine + NADH + 2 H(+). It functions in the pathway amine and polyamine biosynthesis; betaine biosynthesis via choline pathway; betaine from betaine aldehyde: step 1/1. Functionally, involved in the biosynthesis of the osmoprotectant glycine betaine. Catalyzes the irreversible oxidation of betaine aldehyde to the corresponding acid. The chain is Betaine aldehyde dehydrogenase from Cereibacter sphaeroides (strain ATCC 17029 / ATH 2.4.9) (Rhodobacter sphaeroides).